We begin with the raw amino-acid sequence, 443 residues long: UPF0597 protein DVU_0440 (443 aa).

It belongs to the UPF0597 family.

The protein is UPF0597 protein DVU_0440 of Nitratidesulfovibrio vulgaris (strain ATCC 29579 / DSM 644 / CCUG 34227 / NCIMB 8303 / VKM B-1760 / Hildenborough) (Desulfovibrio vulgaris).